The sequence spans 292 residues: ATP synthase gamma chain (292 aa).

The protein belongs to the ATPase gamma chain family. As to quaternary structure, F-type ATPases have 2 components, CF(1) - the catalytic core - and CF(0) - the membrane proton channel. CF(1) has five subunits: alpha(3), beta(3), gamma(1), delta(1), epsilon(1). CF(0) has three main subunits: a, b and c.

Its subcellular location is the cell membrane. Functionally, produces ATP from ADP in the presence of a proton gradient across the membrane. The gamma chain is believed to be important in regulating ATPase activity and the flow of protons through the CF(0) complex. This chain is ATP synthase gamma chain, found in Streptococcus suis (strain 05ZYH33).